We begin with the raw amino-acid sequence, 915 residues long: Metabotropic glutamate receptor 7 (915 aa).

An N-terminal signal peptide occupies residues 1–34; that stretch reads MVQLGKLLRVLTLMKFPCCVLEVLLCVLAAAARG. Topologically, residues 35–590 are extracellular; it reads QEMYAPHSIR…IIKLEWHSPW (556 aa). Residues Cys67 and Cys109 are joined by a disulfide bond. A glycan (N-linked (GlcNAc...) asparagine) is linked at Asn98. Residues Ser159, 180–182, Tyr230, and Asp314 each bind L-glutamate; that span reads AST. Cystine bridges form between Cys249–Cys541, Cys374–Cys390, Cys430–Cys437, Cys523–Cys542, Cys527–Cys545, Cys548–Cys560, and Cys563–Cys576. An L-glutamate-binding site is contributed by Lys407. Asn458 and Asn486 each carry an N-linked (GlcNAc...) asparagine glycan. Asn572 is a glycosylation site (N-linked (GlcNAc...) asparagine). A helical membrane pass occupies residues 591 to 615; that stretch reads AVIPVFLAMLGIIATIFVMATFIRY. Residues 616-627 are Cytoplasmic-facing; the sequence is NDTPIVRASGRE. Residues 628–648 traverse the membrane as a helical segment; the sequence is LSYVLLTGIFLCYIITFLMIA. The Extracellular portion of the chain corresponds to 649–654; sequence KPDVAV. The helical transmembrane segment at 655 to 675 threads the bilayer; it reads CSFRRVFLGLGMCISYAALLT. Topologically, residues 676 to 702 are cytoplasmic; the sequence is KTNRIYRIFEQGKKSVTAPRLISPTSQ. Residues 703–723 traverse the membrane as a helical segment; that stretch reads LAITSSLISVQLLGVFIWFGV. Residues 724–753 lie on the Extracellular side of the membrane; it reads DPPNIIIDYDEHKTMNPEQARGVLKCDITD. The chain crosses the membrane as a helical span at residues 754–775; that stretch reads LQIICSLGYSILLMVTCTVYAI. Residues 776 to 788 lie on the Cytoplasmic side of the membrane; that stretch reads KTRGVPENFNEAK. The helical transmembrane segment at 789–810 threads the bilayer; it reads PIGFTMYTTCIVWLAFIPIFFG. At 811–825 the chain is on the extracellular side; that stretch reads TAQSAEKLYIQTTTL. A helical membrane pass occupies residues 826–850; sequence TISMNLSASVALGMLYMPKVYIIIF. Residues 851 to 915 are Cytoplasmic-facing; it reads HPELNVQKRK…KYVSYNNLVI (65 aa). The tract at residues 874–895 is disordered; it reads SRLSHKPSDRPNGEAKTELCEN. Residues 879–892 show a composition bias toward basic and acidic residues; the sequence is KPSDRPNGEAKTEL. Ser900 is modified (phosphoserine).

The protein belongs to the G-protein coupled receptor 3 family. Homodimer. Interacts with PICK1.

It is found in the cell membrane. Functionally, G-protein coupled receptor activated by glutamate that regulates axon outgrowth through the MAPK-cAMP-PKA signaling pathway during neuronal development. Ligand binding causes a conformation change that triggers signaling via guanine nucleotide-binding proteins (G proteins) and modulates the activity of downstream effectors, such as adenylate cyclase that it inhibits. In Mus musculus (Mouse), this protein is Metabotropic glutamate receptor 7 (Grm7).